Reading from the N-terminus, the 340-residue chain is Large ribosomal subunit protein uL29m (340 aa).

A compositionally biased stretch (polar residues) spans 1 to 10 (MIRSLHTSAV). Residues 1–22 (MIRSLHTSAVRQGRKKWPKPLP) are disordered.

Belongs to the universal ribosomal protein uL29 family. Component of the mitochondrial large ribosomal subunit. Mature mitochondrial ribosomes consist of a small (37S) and a large (54S) subunit. The 37S subunit contains at least 33 different proteins and 1 molecule of RNA (15S). The 54S subunit contains at least 45 different proteins and 1 molecule of RNA (21S).

Its subcellular location is the mitochondrion. The sequence is that of Large ribosomal subunit protein uL29m (MRPL4) from Yarrowia lipolytica (strain CLIB 122 / E 150) (Yeast).